A 180-amino-acid polypeptide reads, in one-letter code: uncharacterized protein (180 aa).

The disordered stretch occupies residues 1 to 31; the sequence is MSTYEEEHGIQQNSRDYQEVGGTSQEEQRRQ. The residue at position 2 (Ser2) is an N-acetylserine. The segment at 109-153 adopts an RING-type zinc-finger fold; it reads CSICYTNYLEDEYPLVVELPHCHHKFDLECLSVWLSRSTTCPLCR.

This is an uncharacterized protein from Saccharomyces cerevisiae (strain ATCC 204508 / S288c) (Baker's yeast).